The sequence spans 432 residues: Neuronal pentraxin-2 (432 aa).

The signal sequence occupies residues Met1 to Ala14. N-linked (GlcNAc...) asparagine glycosylation is found at Asn149 and Asn190. The region spanning Asp224–Cys425 is the Pentraxin (PTX) domain. Cys254 and Cys314 are disulfide-bonded. 5 residues coordinate Ca(2+): Asn278, Glu356, Gln357, Asp358, and Gln368. N-linked (GlcNAc...) asparagine glycosylation is present at Asn394.

Homooligomer or heterooligomer (probably pentamer) with neuronal pentraxin receptor (NPTXR). The cofactor is Ca(2+).

The protein localises to the secreted. Functionally, likely to play role in the modification of cellular properties that underlie long-term plasticity. Binds to agar matrix in a calcium-dependent manner. The sequence is that of Neuronal pentraxin-2 (Nptx2) from Rattus norvegicus (Rat).